Here is a 775-residue protein sequence, read N- to C-terminus: Metal transporter CNNM4 (775 aa).

The Extracellular portion of the chain corresponds to 1-178 (MAPVGGGGRP…LLFMVEEPGR (178 aa)). N-linked (GlcNAc...) asparagine glycosylation is found at Asn-85 and Asn-122. In terms of domain architecture, CNNM transmembrane spans 178 to 358 (RFLPLWLHIL…EPYNDLVKEE (181 aa)). A helical membrane pass occupies residues 179-199 (FLPLWLHILLITVLLVLSGIF). Residues 200–240 (SGLNLGLMALDPMELRIVQNCGTEKERRYARKIEPIRRKGN) lie on the Cytoplasmic side of the membrane. An intramembrane region (helical) is located at residues 241-261 (YLLCSLLLGNVLVNTSLTILL). Residues 262–264 (DNL) are Cytoplasmic-facing. Residues 265–285 (IGSGLMAVASSTIGIVIFGEI) form a helical membrane-spanning segment. The Extracellular portion of the chain corresponds to 286 to 293 (LPQALCSR). Residues 294-316 (HGLAVGANTILLTKFFMLLTFPL) traverse the membrane as a helical segment. Topologically, residues 317–775 (SFPISKLLDF…LHKASHENAI (459 aa)) are cytoplasmic. 2 consecutive CBS domains span residues 377–438 (MTQL…CTPL) and 445–511 (YNHP…ILDE). A phosphoserine mark is found at Ser-660, Ser-664, and Ser-770.

This sequence belongs to the ACDP family. As to quaternary structure, interacts with COX11. As to expression, widely expressed. Highly expressed in heart.

The protein localises to the cell membrane. Its function is as follows. Probable metal transporter. The interaction with the metal ion chaperone COX11 suggests that it may play a role in sensory neuron functions. May play a role in biomineralization and retinal function. The polypeptide is Metal transporter CNNM4 (CNNM4) (Homo sapiens (Human)).